The following is a 564-amino-acid chain: Ferric reductase transmembrane component 1 (564 aa).

Residue asparagine 4 is glycosylated (N-linked (GlcNAc...) asparagine). The next 2 membrane-spanning stretches (helical) occupy residues 10 to 30 (TVIA…MFWL) and 73 to 93 (VILT…FIGM). An N-linked (GlcNAc...) asparagine glycan is attached at asparagine 111. A helical transmembrane segment spans residues 117–137 (VAARLGFLACGLYVTSYFFSI). In terms of domain architecture, Ferric oxidoreductase spans 121 to 254 (LGFLACGLYV…VYMKVCVAVY (134 aa)). Heme is bound by residues histidine 157 and histidine 171. 2 helical membrane passes run 160 to 180 (LSQY…GLAA) and 193 to 213 (IIGY…LPFF). The heme site is built by histidine 225 and histidine 239. The FAD-binding FR-type domain maps to 255 to 410 (VFDRGCRMLR…DGPYGPVSNP (156 aa)). The N-linked (GlcNAc...) asparagine glycan is linked to asparagine 268. Residue 317–323 (HPFTIAS) participates in FAD binding. N-linked (GlcNAc...) asparagine glycosylation occurs at asparagine 360. Phosphoserine is present on residues serine 362, serine 381, and serine 383. Residues 417-437 (LFLFAGGVGVSYILPIILDTI) traverse the membrane as a helical segment. Residue 419–427 (LFAGGVGVS) coordinates NAD(+). Asparagine 501 carries N-linked (GlcNAc...) asparagine glycosylation.

It belongs to the ferric reductase (FRE) family. Requires FAD as cofactor. It depends on heme as a cofactor.

It localises to the cell membrane. It catalyses the reaction 2 a Fe(II)-siderophore + NADP(+) + H(+) = 2 a Fe(III)-siderophore + NADPH. Its function is as follows. Metalloreductase responsible for reducing extracellular iron and copper prior to import. Catalyzes the reductive uptake of Fe(3+)-salts and Fe(3+) bound to catecholate or hydroxamate siderophores. Fe(3+) is reduced to Fe(2+), which then dissociates from the siderophore and can be imported by the high-affinity Fe(2+) transport complex in the plasma membrane. Also participates in Cu(2+) reduction and Cu(+) uptake. This Schizosaccharomyces pombe (strain 972 / ATCC 24843) (Fission yeast) protein is Ferric reductase transmembrane component 1 (frp1).